Reading from the N-terminus, the 227-residue chain is Ribonuclease 3 (227 aa).

One can recognise an RNase III domain in the interval 4–126; the sequence is LDRLERKIGY…IIGAMSLDQG (123 aa). E39 contributes to the Mg(2+) binding site. D43 is a catalytic residue. D112 and E115 together coordinate Mg(2+). Residue E115 is part of the active site. In terms of domain architecture, DRBM spans 153 to 226; that stretch reads DAKTRLQEYL…AEQILKELDI (74 aa).

This sequence belongs to the ribonuclease III family. In terms of assembly, homodimer. The cofactor is Mg(2+).

The protein localises to the cytoplasm. It catalyses the reaction Endonucleolytic cleavage to 5'-phosphomonoester.. Digests double-stranded RNA. Involved in the processing of primary rRNA transcript to yield the immediate precursors to the large and small rRNAs (23S and 16S). Processes some mRNAs, and tRNAs when they are encoded in the rRNA operon. Processes pre-crRNA and tracrRNA of type II CRISPR loci if present in the organism. This Haemophilus influenzae (strain PittGG) protein is Ribonuclease 3.